We begin with the raw amino-acid sequence, 124 residues long: Large ribosomal subunit protein bL12 (124 aa).

Residues 101 to 115 (ALSKDDAEKAKKELE) are compositionally biased toward basic and acidic residues. A disordered region spans residues 101–124 (ALSKDDAEKAKKELEEAGATVELK).

The protein belongs to the bacterial ribosomal protein bL12 family. In terms of assembly, homodimer. Part of the ribosomal stalk of the 50S ribosomal subunit. Forms a multimeric L10(L12)X complex, where L10 forms an elongated spine to which 2 to 4 L12 dimers bind in a sequential fashion. Binds GTP-bound translation factors.

Functionally, forms part of the ribosomal stalk which helps the ribosome interact with GTP-bound translation factors. Is thus essential for accurate translation. The sequence is that of Large ribosomal subunit protein bL12 from Hahella chejuensis (strain KCTC 2396).